Consider the following 133-residue polypeptide: Pheromone-regulated membrane protein 3 (133 aa).

Over 1 to 104 (MTAMKEDNAA…SKVQRENKGS (104 aa)) the chain is Nuclear. Residues 36-100 (ADGFVINKAK…DASESKVQRE (65 aa)) are disordered. Residues 69-75 (GRVRKHK) carry the Bipartite nuclear localization signal motif. A compositionally biased stretch (basic and acidic residues) spans 90–100 (KDASESKVQRE). The chain crosses the membrane as a helical span at residues 105–127 (FYQGAIFGSFLGAAVTTVLSNLA). Over 128–133 (VKALQN) the chain is Perinuclear space.

Interacts with KAR5.

Its subcellular location is the nucleus outer membrane. It is found in the cytoplasm. The protein localises to the cytoskeleton. It localises to the microtubule organizing center. The protein resides in the spindle pole body. Functionally, required for the fusion of nuclear envelopes during mating, ensuring proper karyogamy. Plays a role in the initiation of outer nuclear envelope fusion. The chain is Pheromone-regulated membrane protein 3 (PRM3) from Saccharomyces cerevisiae (strain ATCC 204508 / S288c) (Baker's yeast).